The chain runs to 674 residues: MFRKRNLVLESFRRFDSGNVETLISWVLCSRTSKPSLFCTSVKPARLNWEVSSQVILKKKLETALKDHRVDDAWDVFKDFKRLYGFPESVIMNRFVTVLSYSSDAGWLCKASDLTRLALKQNPGMLSGDVLTKLSLSLARAQMVESACSILRIMLEKGYVLTSDVLRLVVMHMVKTEIGTCLASNYLVQVCDRFVEFNVGKRNSSPGNVVKPDTVLFNLVLGSCVRFGFSLKGQELIELMAKVDVVADAYSIVIMSCIYEMNGMRDELRKFKEHIGQVPPQLLGHYQHFFDNLLSLEFKFDDIGSAGRLALDMCKSKVLVSVENLGFDSEKPRVLPVGSHHIRSGLKIHISPKLLQRDSSLGVDTEATFVNYSNSKLGITNKTLAKLVYGYKRHDNLPELSKLLFSLGGSRLCADVIDACVAIGWLEAAHDILDDMNSAGYPMELATYRMVLSGYYKSKMLRNAEVLLKQMTKAGLITDPSNEIVVSPETEEKDSENTELRDLLVQEINAGKQMKAPSMLYELNSSLYYFCKAKMQGDALITYRKIPKMKIPPTVQSFWILIDMYSSLGMYREITIVWGDIKRNIASKNLKTTQDLLEKLVVNFLRGGYFERVMELISYMKENDMYNDLTMYKNEYLKLHKNLYRTLKASDAVTEAQAQRLEHVKTFRKLVGIV.

PPR repeat units follow at residues 409–443 (GSRL…GYPM), 444–478 (ELAT…GLIT), 519–553 (MLYE…KIPP), 554–584 (TVQS…IKRN), and 593–627 (TQDL…DMYN).

The protein belongs to the PPR family. P subfamily.

This Arabidopsis thaliana (Mouse-ear cress) protein is Pentatricopeptide repeat-containing protein At4g17616.